The primary structure comprises 240 residues: Ribonuclease PH (240 aa).

Phosphate is bound by residues Arg86 and 124–126; that span reads GTR.

This sequence belongs to the RNase PH family. Homohexameric ring arranged as a trimer of dimers.

The enzyme catalyses tRNA(n+1) + phosphate = tRNA(n) + a ribonucleoside 5'-diphosphate. Its function is as follows. Phosphorolytic 3'-5' exoribonuclease that plays an important role in tRNA 3'-end maturation. Removes nucleotide residues following the 3'-CCA terminus of tRNAs; can also add nucleotides to the ends of RNA molecules by using nucleoside diphosphates as substrates, but this may not be physiologically important. Probably plays a role in initiation of 16S rRNA degradation (leading to ribosome degradation) during starvation. The chain is Ribonuclease PH from Rickettsia prowazekii (strain Madrid E).